Here is a 243-residue protein sequence, read N- to C-terminus: 1-(5-phosphoribosyl)-5-[(5-phosphoribosylamino)methylideneamino] imidazole-4-carboxamide isomerase (243 aa).

The active-site Proton acceptor is D10. Residue D128 is the Proton donor of the active site.

The protein belongs to the HisA/HisF family.

It localises to the cytoplasm. The enzyme catalyses 1-(5-phospho-beta-D-ribosyl)-5-[(5-phospho-beta-D-ribosylamino)methylideneamino]imidazole-4-carboxamide = 5-[(5-phospho-1-deoxy-D-ribulos-1-ylimino)methylamino]-1-(5-phospho-beta-D-ribosyl)imidazole-4-carboxamide. Its pathway is amino-acid biosynthesis; L-histidine biosynthesis; L-histidine from 5-phospho-alpha-D-ribose 1-diphosphate: step 4/9. The polypeptide is 1-(5-phosphoribosyl)-5-[(5-phosphoribosylamino)methylideneamino] imidazole-4-carboxamide isomerase (Helicobacter hepaticus (strain ATCC 51449 / 3B1)).